The chain runs to 223 residues: Ribonuclease 3 (223 aa).

Positions 3–125 constitute an RNase III domain; the sequence is LERLQKKLGY…IIAAVYLDAG (123 aa). Glu-38 is a Mg(2+) binding site. Asp-42 is an active-site residue. The Mg(2+) site is built by Asp-111 and Glu-114. Glu-114 is an active-site residue. One can recognise a DRBM domain in the interval 152–222; it reads DPKTRLQEYL…ALQVIKVLGI (71 aa).

Belongs to the ribonuclease III family. Homodimer. Mg(2+) serves as cofactor.

The protein resides in the cytoplasm. It catalyses the reaction Endonucleolytic cleavage to 5'-phosphomonoester.. In terms of biological role, digests double-stranded RNA. Involved in the processing of primary rRNA transcript to yield the immediate precursors to the large and small rRNAs (23S and 16S). Processes some mRNAs, and tRNAs when they are encoded in the rRNA operon. Processes pre-crRNA and tracrRNA of type II CRISPR loci if present in the organism. The protein is Ribonuclease 3 of Glaesserella parasuis serovar 5 (strain SH0165) (Haemophilus parasuis).